Consider the following 391-residue polypeptide: Transcription factor TCP3 (391 aa).

Positions 1-34 (MAPDNDHFLDSPSPPLLEMRHHQSATENGGGCGE) are disordered. One can recognise a TCP domain in the interval 49–107 (RKDRHSKVCTAKGPRDRRVRLSAPTAIQFYDVQDRLGFDRPSKAVDWLITKAKSAIDDL). Disordered stretches follow at residues 122–168 (HAAA…PASM), 317–345 (HHHH…PGIH), and 363–391 (FRIP…DSRH). Positions 381-391 (KPSSASSDSRH) are enriched in polar residues.

Interacts with SPL. Interacts with KIN10; KIN11 and FLZ3. As to expression, expressed in cotyledons, particularly in the vascular region, in leaves, roots, buds, flowers and immature siliques.

It is found in the nucleus. In terms of biological role, plays a pivotal role in the control of morphogenesis of shoot organs by negatively regulating the expression of boundary-specific genes such as CUC genes, probably through the induction of miRNA (e.g. miR164). Participates in ovule development. This chain is Transcription factor TCP3 (TCP3), found in Arabidopsis thaliana (Mouse-ear cress).